The chain runs to 128 residues: Fluoride-specific ion channel FluC (128 aa).

4 helical membrane passes run 5–25, 35–55, 67–87, and 96–116; these read IVAIFVGAGLGALLRWFLSIG, LGTLASNLIGGYLIGIAVVAF, LFVITGFMGGLTTFSTYSVEV, and FGWALAVAALHLIGSFTLTGL. 2 residues coordinate Na(+): glycine 75 and threonine 78.

Belongs to the fluoride channel Fluc/FEX (TC 1.A.43) family.

It localises to the cell inner membrane. It catalyses the reaction fluoride(in) = fluoride(out). Na(+) is not transported, but it plays an essential structural role and its presence is essential for fluoride channel function. Functionally, fluoride-specific ion channel. Important for reducing fluoride concentration in the cell, thus reducing its toxicity. The chain is Fluoride-specific ion channel FluC from Burkholderia pseudomallei (strain 1106a).